We begin with the raw amino-acid sequence, 454 residues long: tRNA modification GTPase MnmE (454 aa).

Arg23, Glu80, and Lys120 together coordinate (6S)-5-formyl-5,6,7,8-tetrahydrofolate. The 162-residue stretch at 216–377 folds into the TrmE-type G domain; it reads GMKVVIAGRP…LRSHLKEAMG (162 aa). A K(+)-binding site is contributed by Asn226. GTP contacts are provided by residues 226–231, 245–251, 270–273, and 358–360; these read NAGKSS, TDIAGTT, DTAG, and SAR. Residue Ser230 participates in Mg(2+) binding. Thr245, Ile247, and Thr250 together coordinate K(+). Thr251 is a Mg(2+) binding site. Lys454 serves as a coordination point for (6S)-5-formyl-5,6,7,8-tetrahydrofolate.

It belongs to the TRAFAC class TrmE-Era-EngA-EngB-Septin-like GTPase superfamily. TrmE GTPase family. Homodimer. Heterotetramer of two MnmE and two MnmG subunits. It depends on K(+) as a cofactor.

It localises to the cytoplasm. Functionally, exhibits a very high intrinsic GTPase hydrolysis rate. Involved in the addition of a carboxymethylaminomethyl (cmnm) group at the wobble position (U34) of certain tRNAs, forming tRNA-cmnm(5)s(2)U34. The sequence is that of tRNA modification GTPase MnmE from Proteus mirabilis (strain HI4320).